A 246-amino-acid polypeptide reads, in one-letter code: UPF0309 protein TTE0306 (246 aa).

In terms of domain architecture, SIS spans 31–212; the sequence is ITESLISEDS…EAEIITNMLE (182 aa).

The protein belongs to the UPF0309 family.

The chain is UPF0309 protein TTE0306 from Caldanaerobacter subterraneus subsp. tengcongensis (strain DSM 15242 / JCM 11007 / NBRC 100824 / MB4) (Thermoanaerobacter tengcongensis).